The primary structure comprises 454 residues: Retinoblastoma-binding protein homolog 5 (454 aa).

WD repeat units follow at residues 23-64 (LQNA…RTFS), 65-104 (AHCL…LLHR), 153-192 (SSDE…CVAW), 196-235 (NTVQ…HQRG), 248-288 (VNKA…LIKI), and 292-330 (NKGE…NWSA).

As to quaternary structure, component of the SET2 complex (also known as the SET1/COMPASS complex), which contains at least set-2, swd-2.1, cfp-1, rbbp-5, wdr-5.1, dpy-30 and ash-2.

It is found in the nucleus. Required for di- and trimethylation at 'Lys-4' of histone H3. Regulates left/right asymmetry of ASE sensory neurons, via its role as a component of the SET2 complex. The chain is Retinoblastoma-binding protein homolog 5 (rbbp-5) from Caenorhabditis elegans.